We begin with the raw amino-acid sequence, 157 residues long: SsrA-binding protein (157 aa).

This sequence belongs to the SmpB family.

The protein localises to the cytoplasm. Required for rescue of stalled ribosomes mediated by trans-translation. Binds to transfer-messenger RNA (tmRNA), required for stable association of tmRNA with ribosomes. tmRNA and SmpB together mimic tRNA shape, replacing the anticodon stem-loop with SmpB. tmRNA is encoded by the ssrA gene; the 2 termini fold to resemble tRNA(Ala) and it encodes a 'tag peptide', a short internal open reading frame. During trans-translation Ala-aminoacylated tmRNA acts like a tRNA, entering the A-site of stalled ribosomes, displacing the stalled mRNA. The ribosome then switches to translate the ORF on the tmRNA; the nascent peptide is terminated with the 'tag peptide' encoded by the tmRNA and targeted for degradation. The ribosome is freed to recommence translation, which seems to be the essential function of trans-translation. This chain is SsrA-binding protein, found in Syntrophomonas wolfei subsp. wolfei (strain DSM 2245B / Goettingen).